Here is a 175-residue protein sequence, read N- to C-terminus: ATP synthase subunit delta (175 aa).

This sequence belongs to the ATPase delta chain family. As to quaternary structure, F-type ATPases have 2 components, F(1) - the catalytic core - and F(0) - the membrane proton channel. F(1) has five subunits: alpha(3), beta(3), gamma(1), delta(1), epsilon(1). F(0) has three main subunits: a(1), b(2) and c(10-14). The alpha and beta chains form an alternating ring which encloses part of the gamma chain. F(1) is attached to F(0) by a central stalk formed by the gamma and epsilon chains, while a peripheral stalk is formed by the delta and b chains.

The protein resides in the cell inner membrane. Its function is as follows. F(1)F(0) ATP synthase produces ATP from ADP in the presence of a proton or sodium gradient. F-type ATPases consist of two structural domains, F(1) containing the extramembraneous catalytic core and F(0) containing the membrane proton channel, linked together by a central stalk and a peripheral stalk. During catalysis, ATP synthesis in the catalytic domain of F(1) is coupled via a rotary mechanism of the central stalk subunits to proton translocation. In terms of biological role, this protein is part of the stalk that links CF(0) to CF(1). It either transmits conformational changes from CF(0) to CF(1) or is implicated in proton conduction. The polypeptide is ATP synthase subunit delta (Xanthomonas euvesicatoria pv. vesicatoria (strain 85-10) (Xanthomonas campestris pv. vesicatoria)).